We begin with the raw amino-acid sequence, 542 residues long: Trans-alpha-bergamotene synthase (542 aa).

5 residues coordinate Mg(2+): Asp-295, Asp-299, Asp-439, Thr-443, and Glu-447. Residues 295–299 (DDFYD) carry the DDXXD motif motif.

This sequence belongs to the terpene synthase family. The cofactor is Mg(2+).

The catalysed reaction is (2E,6E)-farnesyl diphosphate = (1S,5S,6R)-alpha-bergamotene + diphosphate. It participates in secondary metabolite biosynthesis; terpenoid biosynthesis. Functionally, sesquiterpene synthase converting farnesyl diphosphate to trans-alpha-bergamotene as the major product. In Phyla dulcis (Aztec sweet herb), this protein is Trans-alpha-bergamotene synthase.